The sequence spans 307 residues: Aspartate carbamoyltransferase catalytic subunit (307 aa).

Positions 59 and 60 each coordinate carbamoyl phosphate. Lys-87 lines the L-aspartate pocket. Carbamoyl phosphate contacts are provided by Arg-109, His-137, and Gln-140. Arg-173 and Arg-223 together coordinate L-aspartate. Carbamoyl phosphate is bound by residues Gly-266 and Pro-267.

This sequence belongs to the aspartate/ornithine carbamoyltransferase superfamily. ATCase family. In terms of assembly, heterododecamer (2C3:3R2) of six catalytic PyrB chains organized as two trimers (C3), and six regulatory PyrI chains organized as three dimers (R2).

It catalyses the reaction carbamoyl phosphate + L-aspartate = N-carbamoyl-L-aspartate + phosphate + H(+). It participates in pyrimidine metabolism; UMP biosynthesis via de novo pathway; (S)-dihydroorotate from bicarbonate: step 2/3. Its function is as follows. Catalyzes the condensation of carbamoyl phosphate and aspartate to form carbamoyl aspartate and inorganic phosphate, the committed step in the de novo pyrimidine nucleotide biosynthesis pathway. This chain is Aspartate carbamoyltransferase catalytic subunit, found in Helicobacter pylori (strain ATCC 700392 / 26695) (Campylobacter pylori).